The chain runs to 201 residues: 3-isopropylmalate dehydratase small subunit (201 aa).

Belongs to the LeuD family. LeuD type 1 subfamily. As to quaternary structure, heterodimer of LeuC and LeuD.

It carries out the reaction (2R,3S)-3-isopropylmalate = (2S)-2-isopropylmalate. It functions in the pathway amino-acid biosynthesis; L-leucine biosynthesis; L-leucine from 3-methyl-2-oxobutanoate: step 2/4. Its function is as follows. Catalyzes the isomerization between 2-isopropylmalate and 3-isopropylmalate, via the formation of 2-isopropylmaleate. In Dinoroseobacter shibae (strain DSM 16493 / NCIMB 14021 / DFL 12), this protein is 3-isopropylmalate dehydratase small subunit.